Reading from the N-terminus, the 343-residue chain is Flavone 3'-O-methyltransferase OMT1 (343 aa).

A (E)-ferulate-binding site is contributed by asparagine 107. S-adenosyl-L-homocysteine-binding residues include glycine 184, aspartate 207, aspartate 227, methionine 228, methionine 240, and lysine 241. Histidine 245 acts as the Proton acceptor in catalysis. Aspartate 246 serves as a coordination point for (E)-5-hydroxyferulate. Residues glutamate 273 and glutamate 305 contribute to the active site.

The protein belongs to the class I-like SAM-binding methyltransferase superfamily. Cation-independent O-methyltransferase family. COMT subfamily. In terms of assembly, homodimer.

The enzyme catalyses (E)-5-hydroxyferulate + S-adenosyl-L-methionine = (E)-sinapate + S-adenosyl-L-homocysteine + H(+). It carries out the reaction luteolin + S-adenosyl-L-methionine = chrysoeriol + S-adenosyl-L-homocysteine + H(+). It catalyses the reaction quercetin + S-adenosyl-L-methionine = isorhamnetin + S-adenosyl-L-homocysteine + H(+). The catalysed reaction is (E)-caffeate + S-adenosyl-L-methionine = (E)-ferulate + S-adenosyl-L-homocysteine + H(+). The enzyme catalyses a 3'-hydroxyflavone + S-adenosyl-L-methionine = a 3'-methoxyflavone + S-adenosyl-L-homocysteine + H(+). Its pathway is flavonoid metabolism. Functionally, catalyzes the 3'-O-methylation of the flavonoids luteolin and quercetin. Catalyzes the 3- of 5-O-methylation of the phenylpropanoids caffeate and 5-hydroxyferulate. Substrate preference is 5-hydroxyferulate &gt; luteolin &gt; quercetin &gt; caffeate. Apigenin, kempferol and 3,4-dimethylquercetin do not seem to be substrates for methylation. In Chrysosplenium americanum (American golden saxifrage), this protein is Flavone 3'-O-methyltransferase OMT1.